The primary structure comprises 270 residues: MKIVLVSRIDEADALRYTASLARELEGLGHEVALEEGTAAHLGEGGISFEEIDGDLVVVVGGDGSVLLTVHQMKKQVPVLGINWGEVGFLADLEPDEAGTFFAAHTEGFHIERRMRVSLSVNGVPLGDALNEGLVVTDRPAKMLRFGVYVDGTPAERFRADGLLVSTPTGSTAYAMSAGGPIVDPQIEGFLLVPLAPYMLSSRPHLISTGRNLEITLETEKPAHLVIDGQSTFELEKEATLTVKKSDQPALFVHTGKPFFEKVNHKLRNL.

Asp63 functions as the Proton acceptor in the catalytic mechanism. NAD(+)-binding positions include 63–64 (DG), 131–132 (NE), Lys142, Arg159, Asp161, 172–177 (TAYAMS), Ala196, and Gln230.

The protein belongs to the NAD kinase family. A divalent metal cation is required as a cofactor.

Its subcellular location is the cytoplasm. The catalysed reaction is NAD(+) + ATP = ADP + NADP(+) + H(+). In terms of biological role, involved in the regulation of the intracellular balance of NAD and NADP, and is a key enzyme in the biosynthesis of NADP. Catalyzes specifically the phosphorylation on 2'-hydroxyl of the adenosine moiety of NAD to yield NADP. This chain is NAD kinase, found in Methanoculleus marisnigri (strain ATCC 35101 / DSM 1498 / JR1).